Consider the following 860-residue polypeptide: GPI ethanolamine phosphate transferase 2 (860 aa).

N-linked (GlcNAc...) asparagine glycosylation is found at Asn-123 and Asn-180. Transmembrane regions (helical) follow at residues 408 to 428 (LGGI…FSAL), 438 to 458 (LYLI…TVEE), 459 to 479 (EHQI…ISGS), 487 to 506 (FNWM…NQTG), 524 to 544 (NHPV…NKVW), 555 to 575 (LAFL…ITQA), 576 to 596 (WEAG…PGTL), and 639 to 659 (AFLT…LFMV). An N-linked (GlcNAc...) asparagine glycan is attached at Asn-672. The next 4 membrane-spanning stretches (helical) occupy residues 692–712 (LVLV…FSMG), 736–756 (FVGV…STAG), 795–815 (VYVV…TCFF), and 834–854 (FVWT…IFVV).

Belongs to the PIGG/PIGN/PIGO family. PIGG subfamily.

Its subcellular location is the endoplasmic reticulum membrane. It functions in the pathway glycolipid biosynthesis; glycosylphosphatidylinositol-anchor biosynthesis. Functionally, ethanolamine phosphate transferase involved in glycosylphosphatidylinositol-anchor biosynthesis. Transfers ethanolamine phosphate to the GPI second mannose. The chain is GPI ethanolamine phosphate transferase 2 (LAS21) from Yarrowia lipolytica (strain CLIB 122 / E 150) (Yeast).